The chain runs to 187 residues: Protein ECM23 (187 aa).

Disordered stretches follow at residues 106-127 (GKKSLAGYRPKSRKKQTILPNG) and 167-187 (KKIRSQQSSDDGTKNFIFKNK). The GATA-type zinc-finger motif lies at 126 to 180 (NGQPKECATCGDTWTSQWRSGPNGNVELCSRCGIAYRKKMEKKIRSQQSSDDGTK).

Involved in morphogenesis. May be involved in cell wall organization and biogenesis. The sequence is that of Protein ECM23 (ECM23) from Saccharomyces cerevisiae (strain ATCC 204508 / S288c) (Baker's yeast).